The sequence spans 221 residues: GTP-binding nuclear protein Ran-3 (221 aa).

Residues 10 to 174 (DYPSFKLVIV…LYLARKLAGD (165 aa)) enclose the Small GTPase Ran-type domain. 21 to 28 (DGGTGKTT) serves as a coordination point for GTP. The switch-I stretch occupies residues 40-48 (KKYEPTIGV). GTP-binding positions include glycine 71, 125-128 (NKVD), and 153-155 (SAK). Residues 71-87 (GQEKFGGLRDGYYIHGQ) are switch-II. The interval 201 to 221 (EAELAAAASQPLPDDDDDTFE) is disordered.

The protein belongs to the small GTPase superfamily. Ran family. In terms of assembly, found in a nuclear export complex with RanGTP, exportin and pre-miRNA. Interacts with RanBP1a and RanBP1b. Interacts with KPNB1.

Its subcellular location is the nucleus. In terms of biological role, GTP-binding protein involved in nucleocytoplasmic transport. Required for the import of protein into the nucleus and also for RNA export. Involved in chromatin condensation and control of cell cycle. This is GTP-binding nuclear protein Ran-3 (RAN3) from Arabidopsis thaliana (Mouse-ear cress).